Consider the following 477-residue polypeptide: RTX-I toxin determinant D (477 aa).

Over 1-59 (MKTWLMGLYEFFQAYKTVWTEIWKIRHQLDTPDREKDENEFLPAHLELIETPVSKKPRL) the chain is Cytoplasmic. The helical transmembrane segment at 60 to 80 (IAYLIMLFLFLALVISIVSHV) threads the bilayer. Over 81–477 (EIVATATGKL…ESVSESLRER (397 aa)) the chain is Periplasmic.

This sequence belongs to the membrane fusion protein (MFP) (TC 8.A.1) family.

Its subcellular location is the cell inner membrane. Its function is as follows. Involved in the transport of the toxin RTX-I as well as that of RTX-II. This is RTX-I toxin determinant D (apxID) from Actinobacillus pleuropneumoniae (Haemophilus pleuropneumoniae).